Consider the following 994-residue polypeptide: Chloride channel protein E (994 aa).

Residues 1-33 (MTRKENEESESLSSSSSPIDNSNNNNNNNNHSI) form a disordered region. The Cytoplasmic segment spans residues 1–163 (MTRKENEESE…HWLGKERIST (163 aa)). Low complexity predominate over residues 11 to 32 (SLSSSSSPIDNSNNNNNNNNHS). Helical transmembrane passes span 164-184 (LLFIPTLGILIALMGILCDFL), 227-247 (IVFVGYSVFFALISVCCISFI), 271-291 (VLGFKTLVSKIVGMVCASAAG), 300-320 (FMHASAIISQMLMNLKVFGAI), 334-354 (ALTSGVVANFGAPIGGLLFAI), 362-382 (VMGNLWKGFLCATTTAIIFFL), 410-430 (LITFVGIGIITGLIGAFFVFI), 449-469 (IILVLVVSLFSAIITYSAGPL), 505-525 (LLVFIVVKLILTAFNIVLPIP), 527-547 (GAITPFIVTGAALGRLFGEIL), and 554-574 (QAIEPAGFAAIASAGLVSGTI). Residues 644 to 705 (MKKNINYLSM…LDIHIENIEQ (62 aa)) form the CBS 1 domain. Disordered stretches follow at residues 715–767 (FVNN…NSEN), 802–822 (IKPNQDESSSNSNGGSSSDFE), and 846–872 (DENSSLGEKPIIEHDDEDDDEEEGDGI). Low complexity-rich tracts occupy residues 717 to 764 (NNNN…NSNN) and 809 to 822 (SSSNSNGGSSSDFE). The span at 859–870 (HDDEDDDEEEGD) shows a compositional bias: acidic residues. Residues 944–994 (MDLAPSQVPDLTPLNKVFHLFTMLGLGFTYVTSLGKLVGVITKNSLMEQDL) form the CBS 2 domain.

It belongs to the chloride channel (TC 2.A.49) family.

It localises to the membrane. Its function is as follows. Voltage-gated chloride channel. Chloride channels may have several functions including the regulation of cell volume, membrane potential stabilization and signal transduction. The protein is Chloride channel protein E (clcE) of Dictyostelium discoideum (Social amoeba).